The following is a 329-amino-acid chain: Isopentenyl-diphosphate delta-isomerase (329 aa).

Substrate is bound at residue 4 to 5; that stretch reads RK. FMN-binding positions include 59-61, Ser-89, and Asn-116; that span reads AMT. Gln-146 contributes to the substrate binding site. Glu-147 lines the Mg(2+) pocket. FMN-binding positions include Lys-178, Ser-203, Thr-208, 252–254, and 273–274; these read GVR and SR.

It belongs to the IPP isomerase type 2 family. As to quaternary structure, homooctamer. Dimer of tetramers. FMN serves as cofactor. The cofactor is NADPH. It depends on Mg(2+) as a cofactor.

The protein localises to the cytoplasm. It carries out the reaction isopentenyl diphosphate = dimethylallyl diphosphate. In terms of biological role, involved in the biosynthesis of isoprenoids. Catalyzes the 1,3-allylic rearrangement of the homoallylic substrate isopentenyl (IPP) to its allylic isomer, dimethylallyl diphosphate (DMAPP). The chain is Isopentenyl-diphosphate delta-isomerase from Streptococcus pyogenes serotype M28 (strain MGAS6180).